A 107-amino-acid chain; its full sequence is N(4)-acetylcytidine amidohydrolase (107 aa).

The ASCH domain maps to 9-105 (TFFEFLTPLI…KLFVIEYELI (97 aa)). Lys-23 serves as the catalytic Proton acceptor. Thr-26 serves as the catalytic Nucleophile. Residue Glu-76 is the Proton donor of the active site.

This sequence belongs to the N(4)-acetylcytidine amidohydrolase family.

The enzyme catalyses N(4)-acetylcytidine + H2O = cytidine + acetate + H(+). It carries out the reaction N(4)-acetyl-2'-deoxycytidine + H2O = 2'-deoxycytidine + acetate + H(+). The catalysed reaction is N(4)-acetylcytosine + H2O = cytosine + acetate + H(+). Functionally, catalyzes the hydrolysis of N(4)-acetylcytidine (ac4C). This Vibrio parahaemolyticus serotype O3:K6 (strain RIMD 2210633) protein is N(4)-acetylcytidine amidohydrolase.